A 265-amino-acid chain; its full sequence is Histidine racemase (265 aa).

The active-site Proton acceptor is C67. C209 acts as the Proton donor in catalysis.

The protein belongs to the histidine racemase family. Homodimer.

It catalyses the reaction L-histidine = D-histidine. Its activity is regulated as follows. Activity is not affected by buffer composition (PO(4) or Tris), ions (SO(4)(2-), Mg(2+) and EDTA) or the PLP inhibitor hydroxylamine. However, the activity is hindered by iodoacetamide and Hg(2+), which are known inhibitors of enzymes with catalytic thiols. Cofactor-independent isomerase that catalyzes the reversible conversion of L-histidine to D-histidine. Shows weak activity with L,L-lanthionine. The catalytic turnover is 10'000-fold faster with L-histidine than with L,L-lanthionine. May play a role in growth of F.nucleatum. The protein is Histidine racemase of Fusobacterium nucleatum subsp. nucleatum (strain ATCC 25586 / DSM 15643 / BCRC 10681 / CIP 101130 / JCM 8532 / KCTC 2640 / LMG 13131 / VPI 4355).